We begin with the raw amino-acid sequence, 20 residues long: Trypsin inhibitor A chain (20 aa).

It belongs to the protease inhibitor I3 (leguminous Kunitz-type inhibitor) family. Heterodimer of an 'A' and a 'B' chain linked by a disulfide bond.

Its function is as follows. Inhibits trypsin and alpha-chymotrypsin. The chain is Trypsin inhibitor A chain from Albizia julibrissin (Silk tree).